A 311-amino-acid chain; its full sequence is MLMPGLLNDPVLLLGLMAFGALLLALPLAFWNLSGEPRSSTSRVVQLLVVAANLLLTAQLLWRWLDSGHFPISNLYESLCFLAWGCTFTQLFVERSWPSPLVPAATTPMALVCVAFASFALPDTLQNAAPLVPALRSSWLVMHVSVIMMSYAALLVGSLLSAAVLFTQPGQAMELRSSSIGSGSFQKAGLQTDGGTVVLEAAPIALSERLDNLSYRTITVGFLLLTVGIISGAVWANEAWGSWWSWDPKETWALICWLVYAAYLHTRLSRGWQGRRPAWVAVSGLFVISVCYIGVNLLGIGLHSYGWFFDS.

Transmembrane regions (helical) follow at residues 11 to 31 (VLLLGLMAFGALLLALPLAFW), 44 to 64 (VVQLLVVAANLLLTAQLLWRW), 68 to 88 (GHFPISNLYESLCFLAWGCTF), 101 to 121 (LVPAATTPMALVCVAFASFAL), 146 to 166 (VIMMSYAALLVGSLLSAAVLF), 217 to 237 (TITVGFLLLTVGIISGAVWAN), 251 to 268 (TWALICWLVYAAYLHTRL), and 280 to 300 (VAVSGLFVISVCYIGVNLLGI).

It belongs to the CcmF/CycK/Ccl1/NrfE/CcsA family. As to quaternary structure, may interact with ccs1.

The protein resides in the cellular thylakoid membrane. In terms of biological role, required during biogenesis of c-type cytochromes (cytochrome c6 and cytochrome f) at the step of heme attachment. The sequence is that of Cytochrome c biogenesis protein CcsA from Synechococcus sp. (strain RCC307).